The following is a 513-amino-acid chain: ATP synthase subunit alpha (513 aa).

172-179 (GDRQTGKT) serves as a coordination point for ATP.

It belongs to the ATPase alpha/beta chains family. In terms of assembly, F-type ATPases have 2 components, CF(1) - the catalytic core - and CF(0) - the membrane proton channel. CF(1) has five subunits: alpha(3), beta(3), gamma(1), delta(1), epsilon(1). CF(0) has three main subunits: a(1), b(2) and c(9-12). The alpha and beta chains form an alternating ring which encloses part of the gamma chain. CF(1) is attached to CF(0) by a central stalk formed by the gamma and epsilon chains, while a peripheral stalk is formed by the delta and b chains.

The protein localises to the cell inner membrane. It carries out the reaction ATP + H2O + 4 H(+)(in) = ADP + phosphate + 5 H(+)(out). Produces ATP from ADP in the presence of a proton gradient across the membrane. The alpha chain is a regulatory subunit. The polypeptide is ATP synthase subunit alpha (Gluconacetobacter diazotrophicus (strain ATCC 49037 / DSM 5601 / CCUG 37298 / CIP 103539 / LMG 7603 / PAl5)).